The sequence spans 256 residues: Imidazole glycerol phosphate synthase subunit HisF (256 aa).

Residues Asp12 and Asp131 contribute to the active site.

It belongs to the HisA/HisF family. In terms of assembly, heterodimer of HisH and HisF.

The protein resides in the cytoplasm. The enzyme catalyses 5-[(5-phospho-1-deoxy-D-ribulos-1-ylimino)methylamino]-1-(5-phospho-beta-D-ribosyl)imidazole-4-carboxamide + L-glutamine = D-erythro-1-(imidazol-4-yl)glycerol 3-phosphate + 5-amino-1-(5-phospho-beta-D-ribosyl)imidazole-4-carboxamide + L-glutamate + H(+). It participates in amino-acid biosynthesis; L-histidine biosynthesis; L-histidine from 5-phospho-alpha-D-ribose 1-diphosphate: step 5/9. Functionally, IGPS catalyzes the conversion of PRFAR and glutamine to IGP, AICAR and glutamate. The HisF subunit catalyzes the cyclization activity that produces IGP and AICAR from PRFAR using the ammonia provided by the HisH subunit. This chain is Imidazole glycerol phosphate synthase subunit HisF, found in Pseudomonas syringae pv. tomato (strain ATCC BAA-871 / DC3000).